A 313-amino-acid polypeptide reads, in one-letter code: tRNA dimethylallyltransferase (313 aa).

Residue 11-18 (GPTACGKT) participates in ATP binding. Residue 13–18 (TACGKT) participates in substrate binding. 3 interaction with substrate tRNA regions span residues 36–39 (DSAL), 160–164 (QRIGR), and 243–248 (RCVGYR).

Belongs to the IPP transferase family. In terms of assembly, monomer. It depends on Mg(2+) as a cofactor.

It catalyses the reaction adenosine(37) in tRNA + dimethylallyl diphosphate = N(6)-dimethylallyladenosine(37) in tRNA + diphosphate. Catalyzes the transfer of a dimethylallyl group onto the adenine at position 37 in tRNAs that read codons beginning with uridine, leading to the formation of N6-(dimethylallyl)adenosine (i(6)A). The polypeptide is tRNA dimethylallyltransferase (Neisseria gonorrhoeae (strain NCCP11945)).